Consider the following 379-residue polypeptide: MGFPRILSKNNKIYTKLGEFCLSGDSFWIVCHTCQEELQTQDQFWKHIQDEHNFLHGVAKEHSRTSSYCLTDVEAAAAATTPGATASSQGAGSVTAVTVPLALYHCSAKYSDDEQREVELHEAHQQQQQQQQQQLHQQQQQQQRDAAKELAELHANAVAAAAAVAAASDGSARSSSGIDIKVEPATLALPPDMQAAAAAAAAANATIYHLPQLVPAPAPPPTASFVSASGGSTSTTVSTTPPSHQPIMQQQQHQQQQQQQQQTSTTLAMSVNQSTAIAAAALLTGPDLPKDSNSTTASAGSAVSSDDGERWYICDYESCGLKFKYKSRMELHRVVHSKERRFNCDLCSASFKQSCNLSTHRKKKHAMRGIKSELLPQRF.

Residues 29 to 52 form a C2H2-type 1 zinc finger; the sequence is IVCHTCQEELQTQDQFWKHIQDEH. Basic and acidic residues predominate over residues 114-124; the sequence is EQREVELHEAH. 2 disordered regions span residues 114–148 and 221–267; these read EQRE…DAAK and PTAS…STTL. Low complexity-rich tracts occupy residues 125-143, 223-242, and 249-262; these read QQQQ…QQQQ and ASFV…TTPP. C2H2-type zinc fingers lie at residues 312–336 and 342–365; these read YICD…RVVH and FNCD…KKKH.

The protein localises to the nucleus. Functionally, may be a transcription factor for genes having (A+T) stretches in their promoter and/or enhancer regions. Binds to AT rich DNA. This is AT-rich binding protein from Drosophila willistoni (Fruit fly).